Consider the following 128-residue polypeptide: uncharacterized protein (128 aa).

Helical transmembrane passes span 45–65 (GYFHWSLITQNYIIFLFLFPF) and 95–115 (FMSHIPVLTVISYCVCCLSCF).

It localises to the membrane. This is an uncharacterized protein from Saccharomyces cerevisiae (strain ATCC 204508 / S288c) (Baker's yeast).